Here is a 450-residue protein sequence, read N- to C-terminus: Ig mu chain C region (450 aa).

The chain is Ig mu chain C region from Canis lupus familiaris (Dog).